We begin with the raw amino-acid sequence, 492 residues long: E3 ubiquitin-protein ligase ARIH2 (492 aa).

A compositionally biased stretch (polar residues) spans 1 to 11; that stretch reads MSVDMNSQGSD. Residues 1–37 are disordered; sequence MSVDMNSQGSDSNEEDYDPNCEEEEEEEEDPGDIEDY. The segment covering 12-36 has biased composition (acidic residues); it reads SNEEDYDPNCEEEEEEEEDPGDIED. The segment at 64–111 is UBA-like; sequence TYKESEGALHEHMTSLASVLKVSHSVAKLILVNFHWQVSEILDRYRSN. The segment at 134–343 is TRIAD supradomain; sequence PPHHCAVCMQ…SEYYECSRYK (210 aa). The Zn(2+) site is built by Cys138, Cys141, Cys155, His157, Cys160, Cys163, Cys182, Cys187, Cys227, Cys232, Cys248, Cys251, Cys256, Cys259, His264, Cys269, Cys296, and Cys299. The segment at 138 to 187 adopts an RING-type 1 zinc-finger fold; it reads CAVCMQFVRKENLLSLACQHQFCRSCWEQHCSVLVKDGVGVGISCMAQDC. The IBR-type zinc finger occupies 207–269; sequence DKYRRYLFRD…RQMYHAPTDC (63 aa). Residues 296–325 form an RING-type 2; atypical zinc finger; that stretch reads CPKCNICIEKNGGCNHMQCSKCKHDFCWMC. The active site involves Cys309. Cys314, Cys317, Cys322, Cys325, His332, and Cys339 together coordinate Zn(2+). Residue Ser352 is modified to Phosphoserine. An ariadne domain region spans residues 358–492; the sequence is REALKKYLFY…RTLLKDFHDT (135 aa).

It belongs to the RBR family. Ariadne subfamily. As to quaternary structure, interacts (via RING-type zinc finger 1) with UBE2L3. Interacts (via RING-type zinc finger 2) with UBE2N. Interacts with neddylated CUL5. Interacts (via RING-type 2) with GFI1B. Interacts with GFI1; prevents its ubiquitination and proteasomal degradation. Interacts with DCUN1D1 (via UBA-like domain); promotes DCUN1D1 ubiquitination. Ubiquitinated. Ubiquitination promotes proteasomal degradation.

It is found in the nucleus. The protein localises to the cytoplasm. The enzyme catalyses [E2 ubiquitin-conjugating enzyme]-S-ubiquitinyl-L-cysteine + [acceptor protein]-L-lysine = [E2 ubiquitin-conjugating enzyme]-L-cysteine + [acceptor protein]-N(6)-ubiquitinyl-L-lysine.. It participates in protein modification; protein ubiquitination. Its activity is regulated as follows. Autoinhibited by the ariadne domain, which masks the second RING-type zinc finger that contains the active site and inhibits the E3 activity. Inhibition is relieved upon binding to neddylated cullin-RING ubiquitin ligase complexes, which activate the E3 ligase activity of ARIH1. Functionally, E3 ubiquitin-protein ligase, which catalyzes ubiquitination of target proteins together with ubiquitin-conjugating enzyme E2 UBE2L3. Acts as an atypical E3 ubiquitin-protein ligase by working together with cullin-5-RING ubiquitin ligase complex (ECS complex, also named CRL5 complex) and initiating ubiquitination of ECS substrates: associates with ECS complex and specifically mediates addition of the first ubiquitin on ECS targets. The initial ubiquitin is then elongated. E3 ubiquitin-protein ligase activity is activated upon binding to neddylated form of the ECS complex. Mediates 'Lys-6', 'Lys-48'- and 'Lys-63'-linked polyubiquitination. May play a role in myelopoiesis. The sequence is that of E3 ubiquitin-protein ligase ARIH2 (Arih2) from Mus musculus (Mouse).